We begin with the raw amino-acid sequence, 557 residues long: Vacuolar protein sorting-associated protein 30 (557 aa).

2 disordered regions span residues 93–149 and 218–238; these read DDDN…ENQQ and NKEI…SEKE. Acidic residues predominate over residues 135 to 147; sequence DEEEQEATDEDEN. Thr-142 carries the post-translational modification Phosphothreonine. The stretch at 189 to 322 forms a coiled coil; sequence LINRLKSEYD…QLDKLRKINI (134 aa). The interval 320–539 is BARA; it reads INIFNATFKI…LAFSSNLLSK (220 aa). Residues 515 to 540 form a required for membrane-association, autophagic function during starvation and normal autophagosome morphology region; that stretch reads WTTAMKFLLTNVKWLLAFSSNLLSKS.

Belongs to the beclin family. In terms of assembly, component of the autophagy-specific VPS34 PI3-kinase complex I composed of VPS15, VPS30, VPS34, ATG14 and ATG38; and of the VPS34 PI3-kinase complex II composed of VPS15, VPS30, VPS34 and VPS38.

It is found in the endosome membrane. It localises to the vacuole membrane. The protein localises to the preautophagosomal structure membrane. In terms of biological role, required for cytoplasm to vacuole transport (Cvt), autophagy, nucleophagy, and mitophagy, as a part of the autophagy-specific VPS34 PI3-kinase complex I. This complex is essential to recruit the ATG8-phosphatidylinositol conjugate and the ATG12-ATG5 conjugate to the pre-autophagosomal structure. Also involved in endosome-to-Golgi retrograde transport as part of the VPS34 PI3-kinase complex II. This second complex is required for the endosome-to-Golgi retrieval of PEP1 and KEX2, and the recruitment of VPS5 and VPS7, two components of the retromer complex, to endosomal membranes (probably through the synthesis of a specific pool of phosphatidylinositol 3-phosphate recruiting the retromer to the endosomes). Also plays a role in regulation of filamentous growth. This Saccharomyces cerevisiae (strain ATCC 204508 / S288c) (Baker's yeast) protein is Vacuolar protein sorting-associated protein 30.